The primary structure comprises 275 residues: 2,3,4,5-tetrahydropyridine-2,6-dicarboxylate N-succinyltransferase (275 aa).

Substrate contacts are provided by arginine 105 and aspartate 142.

This sequence belongs to the transferase hexapeptide repeat family. As to quaternary structure, homotrimer.

The protein resides in the cytoplasm. The catalysed reaction is (S)-2,3,4,5-tetrahydrodipicolinate + succinyl-CoA + H2O = (S)-2-succinylamino-6-oxoheptanedioate + CoA. Its pathway is amino-acid biosynthesis; L-lysine biosynthesis via DAP pathway; LL-2,6-diaminopimelate from (S)-tetrahydrodipicolinate (succinylase route): step 1/3. This is 2,3,4,5-tetrahydropyridine-2,6-dicarboxylate N-succinyltransferase from Histophilus somni (strain 129Pt) (Haemophilus somnus).